The following is a 218-amino-acid chain: UPF0758 protein SAUSA300_1608 (218 aa).

One can recognise an MPN domain in the interval 92–214; the sequence is KITQPSDVAD…FTSLVEAGYF (123 aa). Residues histidine 163, histidine 165, and aspartate 176 each coordinate Zn(2+). A JAMM motif motif is present at residues 163 to 176; it reads HNHPSGDVTPSQED.

This sequence belongs to the UPF0758 family.

The sequence is that of UPF0758 protein SAUSA300_1608 from Staphylococcus aureus (strain USA300).